Consider the following 495-residue polypeptide: Omega-crystallin (495 aa).

Belongs to the aldehyde dehydrogenase family. In terms of tissue distribution, lens.

Functionally, omega-crystallins are structural components of squids and octopi eye lens. Contains relatively little if any DHAL activity. The protein is Omega-crystallin of Nototodarus sloanii (Wellington flying squid).